The sequence spans 783 residues: Type 4 coupling protein DotL (783 aa).

A helical membrane pass occupies residues 47 to 67 (VSYYFSEAATFLLIMGGIFFL). Positions 100–500 (NIARGITFFG…ICMKLEDPTE (401 aa)) are ATPase domain. Residues 671–773 (VEGALTIFSK…SAKISAEREK (103 aa)) form an interaction with IcmS/IcmW region.

In terms of assembly, the T4BSS is a complex nanomachine composed of several subcomplexes. This subunit is part of the Type IV Coupling Complex (T4CC), a subcomplex composed of the DotLMNYZ core and the IcmSW-LvgA adapter subunits, linked by the C-terminal tail of DotL. Six DotLMNYZ hetero-pentameric units may assemble into a hexameric nanomachine, forming an inner membrane channel for effectors to pass through. Interacts directly with DotM. Interacts directly, via its C-terminal region, with the type IV adapter proteins IcmS and IcmW. Also interacts with DotN and LvgA via its C-terminal region.

The protein localises to the cell inner membrane. Functionally, component of the Dot/Icm type IVB secretion system (T4BSS), which is used to inject bacterial effector proteins into eukaryotic host cells. Part of a subcomplex which recruits effector proteins and delivers them to the core transmembrane subcomplex. Plays a central role in the assembly of the subcomplex. Required for the recruitment of IcmS and IcmW to the inner membrane and for the translocation of adapter-dependent substrates. May have ATPase activity. The polypeptide is Type 4 coupling protein DotL (Legionella pneumophila subsp. pneumophila (strain Philadelphia 1 / ATCC 33152 / DSM 7513)).